Here is a 274-residue protein sequence, read N- to C-terminus: MALQKCKPTSAGRRHLVKVVNSDLHKGKPYAPLLEKNSKSGGRNNNGRITVRHIGGGHKQHYRLIDFKRTKDGIPATVERLEYDPNRSANIALVLYADGERRYIIAPKGLKAGDAIQSGVDAPIKPGNALPMRNMPVGSTVHNVELKPGKGAQIARSAGAYVQILARDGQYVTLRLRSGEVRKVEADCRATLGEVGNAEHMLRSLGKAGANRWRGIRPTVRGVAMNPVDHPHGGGEGRTSGGRHPVSPWGKPTKGAKTRKNKRTDKFIVRRRTK.

Disordered regions lie at residues 28–53 (KPYA…TVRH) and 223–274 (VAMN…RRTK). The span at 39–48 (KSGGRNNNGR) shows a compositional bias: low complexity. The span at 254–274 (KGAKTRKNKRTDKFIVRRRTK) shows a compositional bias: basic residues.

It belongs to the universal ribosomal protein uL2 family. In terms of assembly, part of the 50S ribosomal subunit. Forms a bridge to the 30S subunit in the 70S ribosome.

Functionally, one of the primary rRNA binding proteins. Required for association of the 30S and 50S subunits to form the 70S ribosome, for tRNA binding and peptide bond formation. It has been suggested to have peptidyltransferase activity; this is somewhat controversial. Makes several contacts with the 16S rRNA in the 70S ribosome. The chain is Large ribosomal subunit protein uL2 from Pseudoalteromonas translucida (strain TAC 125).